The following is a 251-amino-acid chain: Cell division protein ZapD (251 aa).

The protein belongs to the ZapD family. In terms of assembly, interacts with FtsZ.

The protein resides in the cytoplasm. Cell division factor that enhances FtsZ-ring assembly. Directly interacts with FtsZ and promotes bundling of FtsZ protofilaments, with a reduction in FtsZ GTPase activity. The protein is Cell division protein ZapD of Burkholderia ambifaria (strain MC40-6).